The chain runs to 240 residues: tRNA (guanine-N(1)-)-methyltransferase (240 aa).

S-adenosyl-L-methionine is bound by residues glycine 110 and 130-135; that span reads IGDYVL.

The protein belongs to the RNA methyltransferase TrmD family. As to quaternary structure, homodimer.

It is found in the cytoplasm. The catalysed reaction is guanosine(37) in tRNA + S-adenosyl-L-methionine = N(1)-methylguanosine(37) in tRNA + S-adenosyl-L-homocysteine + H(+). In terms of biological role, specifically methylates guanosine-37 in various tRNAs. This chain is tRNA (guanine-N(1)-)-methyltransferase, found in Macrococcus caseolyticus (strain JCSC5402) (Macrococcoides caseolyticum).